The sequence spans 201 residues: Pectinesterase inhibitor 7 (201 aa).

Residues Met1–Ala24 form the signal peptide. Cystine bridges form between Cys42–Cys51 and Cys108–Cys159.

It belongs to the PMEI family. As to quaternary structure, binds reversibly to PME3 to inhibit its activity; the stability of the PME3-PMEI7 complex and the inhibition of the pectin methylesterase (PME) activity is pH-dependent, based on protonation status of amino-acids at the complex interface. As to expression, accumulates in etiolated hypocotyls (at protein level).

It is found in the secreted. It localises to the extracellular space. The protein resides in the apoplast. Its subcellular location is the cell wall. Its function is as follows. Pectin methylesterase (PME) inhibitor that can target PME3 in a pH-dependent manner, mainly in slightly acidic conditions (pH 6.0 and 5.0) but not at pH 7.0; this processus relies on changes in the protonation of amino acids involved in intermolecular and intramolecular interactions. Regulates homogalacturonan methylesterification during plant development. The protein is Pectinesterase inhibitor 7 of Arabidopsis thaliana (Mouse-ear cress).